Reading from the N-terminus, the 543-residue chain is Glucose-6-phosphate isomerase (543 aa).

Residue Glu-353 is the Proton donor of the active site. Active-site residues include His-384 and Lys-512.

This sequence belongs to the GPI family.

It is found in the cytoplasm. The catalysed reaction is alpha-D-glucose 6-phosphate = beta-D-fructose 6-phosphate. The protein operates within carbohydrate biosynthesis; gluconeogenesis. It participates in carbohydrate degradation; glycolysis; D-glyceraldehyde 3-phosphate and glycerone phosphate from D-glucose: step 2/4. Catalyzes the reversible isomerization of glucose-6-phosphate to fructose-6-phosphate. The protein is Glucose-6-phosphate isomerase of Christiangramia forsetii (strain DSM 17595 / CGMCC 1.15422 / KT0803) (Gramella forsetii).